Here is a 416-residue protein sequence, read N- to C-terminus: Leu/Ile/Val-binding protein homolog 4 (416 aa).

The N-terminal stretch at 1–26 (MSLKVFLQAGVACAALSLAGAAGASA) is a signal peptide.

This sequence belongs to the leucine-binding protein family.

Component of an amino-acid transport system. This is Leu/Ile/Val-binding protein homolog 4 from Brucella abortus (strain 2308).